The sequence spans 238 residues: MAWRRGFGREEEDAAAAGESGLELCLGLPAYFSSSSSSKPSEGSTAAPAFALRSNGTNASKPSGAAAAAPVVGWPPVRSFRRNLASSSSSSSKQAPPPPSSSPQNGDKASKDGGAEKGMFVKINMDGVPIGRKVDLAAYGGYAQLSAAVDKLFRGLLAAQSAAADGEADAAAAGEMVGGGEYTLVYEDDEGDRMLVGDVPWQMFIATAKRLRVLKSSDLPPPSLMRAAGSRKRAAADS.

The short motif at 24 to 28 (LCLGL) is the EAR-like (transcriptional repression) element. Composition is skewed to low complexity over residues 33–44 (SSSSSSKPSEGS), 59–69 (ASKPSGAAAAA), and 85–94 (ASSSSSSSKQ). 2 disordered regions span residues 33-69 (SSSS…AAAA) and 82-114 (RNLA…KDGG). Residues 118 to 216 (GMFVKINMDG…TAKRLRVLKS (99 aa)) form the PB1 domain. Positions 217–238 (SDLPPPSLMRAAGSRKRAAADS) are disordered. The span at 229-238 (GSRKRAAADS) shows a compositional bias: basic residues.

It belongs to the Aux/IAA family. As to quaternary structure, homodimers and heterodimers. As to expression, highly expressed in flowers.

Its subcellular location is the nucleus. Aux/IAA proteins are short-lived transcriptional factors that function as repressors of early auxin response genes at low auxin concentrations. In Oryza sativa subsp. japonica (Rice), this protein is Auxin-responsive protein IAA2 (IAA2).